A 532-amino-acid chain; its full sequence is 3-hydroxy-3-methylglutaryl-coenzyme A reductase 1 (532 aa).

Residues 63-83 (FATVVYLVSLFAHPDAPATTT) traverse the membrane as a helical segment. The linker stretch occupies residues 77–117 (DAPATTTGDDDDGQGGSRRARPAAAEPAPMHGHGGGMMEAD). Residues 78–111 (APATTTGDDDDGQGGSRRARPAAAEPAPMHGHGG) form a disordered region. Residues 98 to 107 (PAAAEPAPMH) are compositionally biased toward low complexity. The catalytic stretch occupies residues 118-532 (DEEIVAAVAS…SSKDVAKAAS (415 aa)). Catalysis depends on Glu211, which acts as the Charge relay system. The N-linked (GlcNAc...) asparagine glycan is linked to Asn275. Catalysis depends on charge relay system residues Lys343 and Asp419. The active-site Proton donor is His517. The N-linked (GlcNAc...) asparagine glycan is linked to Asn521.

This sequence belongs to the HMG-CoA reductase family.

The protein localises to the endoplasmic reticulum membrane. The catalysed reaction is (R)-mevalonate + 2 NADP(+) + CoA = (3S)-3-hydroxy-3-methylglutaryl-CoA + 2 NADPH + 2 H(+). It functions in the pathway metabolic intermediate biosynthesis; (R)-mevalonate biosynthesis; (R)-mevalonate from acetyl-CoA: step 3/3. In terms of biological role, catalyzes the synthesis of mevalonate. The specific precursor of all isoprenoid compounds present in plants. The chain is 3-hydroxy-3-methylglutaryl-coenzyme A reductase 1 (HMG1) from Oryza sativa subsp. japonica (Rice).